The sequence spans 401 residues: Methionine import ATP-binding protein MetN (401 aa).

Positions 6-248 (ITFDHVVKEF…PQQPVTKRFI (243 aa)) constitute an ABC transporter domain. 45-52 (GYSGAGKS) provides a ligand contact to ATP.

It belongs to the ABC transporter superfamily. Methionine importer (TC 3.A.1.24) family. In terms of assembly, the complex is composed of two ATP-binding proteins (MetN), two transmembrane proteins (MetI) and a solute-binding protein (MetQ).

It localises to the cell membrane. It catalyses the reaction L-methionine(out) + ATP + H2O = L-methionine(in) + ADP + phosphate + H(+). The catalysed reaction is D-methionine(out) + ATP + H2O = D-methionine(in) + ADP + phosphate + H(+). Part of the ABC transporter complex MetNIQ involved in methionine import. Responsible for energy coupling to the transport system. This is Methionine import ATP-binding protein MetN from Bifidobacterium longum (strain NCC 2705).